The chain runs to 356 residues: Phosphoribosylformylglycinamidine cyclo-ligase (356 aa).

This sequence belongs to the AIR synthase family.

Its subcellular location is the cytoplasm. The catalysed reaction is 2-formamido-N(1)-(5-O-phospho-beta-D-ribosyl)acetamidine + ATP = 5-amino-1-(5-phospho-beta-D-ribosyl)imidazole + ADP + phosphate + H(+). The protein operates within purine metabolism; IMP biosynthesis via de novo pathway; 5-amino-1-(5-phospho-D-ribosyl)imidazole from N(2)-formyl-N(1)-(5-phospho-D-ribosyl)glycinamide: step 2/2. The sequence is that of Phosphoribosylformylglycinamidine cyclo-ligase from Nitrobacter hamburgensis (strain DSM 10229 / NCIMB 13809 / X14).